A 495-amino-acid polypeptide reads, in one-letter code: Lysine--tRNA ligase (495 aa).

Residues E406 and E413 each contribute to the Mg(2+) site.

The protein belongs to the class-II aminoacyl-tRNA synthetase family. Homodimer. Mg(2+) is required as a cofactor.

It is found in the cytoplasm. The catalysed reaction is tRNA(Lys) + L-lysine + ATP = L-lysyl-tRNA(Lys) + AMP + diphosphate. The chain is Lysine--tRNA ligase from Leuconostoc mesenteroides subsp. mesenteroides (strain ATCC 8293 / DSM 20343 / BCRC 11652 / CCM 1803 / JCM 6124 / NCDO 523 / NBRC 100496 / NCIMB 8023 / NCTC 12954 / NRRL B-1118 / 37Y).